Consider the following 711-residue polypeptide: Ribosomal RNA large subunit methyltransferase K/L (711 aa).

In terms of domain architecture, THUMP spans 43-154 (TLYRTLLWSR…RENLVISLDL (112 aa)).

The protein belongs to the methyltransferase superfamily. RlmKL family.

The protein localises to the cytoplasm. It carries out the reaction guanosine(2445) in 23S rRNA + S-adenosyl-L-methionine = N(2)-methylguanosine(2445) in 23S rRNA + S-adenosyl-L-homocysteine + H(+). It catalyses the reaction guanosine(2069) in 23S rRNA + S-adenosyl-L-methionine = N(2)-methylguanosine(2069) in 23S rRNA + S-adenosyl-L-homocysteine + H(+). In terms of biological role, specifically methylates the guanine in position 2445 (m2G2445) and the guanine in position 2069 (m7G2069) of 23S rRNA. This Haemophilus influenzae (strain PittEE) protein is Ribosomal RNA large subunit methyltransferase K/L.